The chain runs to 306 residues: Non-specific ribonucleoside hydrolase RihC (306 aa).

H235 is an active-site residue.

It belongs to the IUNH family. RihC subfamily.

Functionally, hydrolyzes both purine and pyrimidine ribonucleosides with a broad-substrate specificity. This Salmonella paratyphi B (strain ATCC BAA-1250 / SPB7) protein is Non-specific ribonucleoside hydrolase RihC.